Here is a 237-residue protein sequence, read N- to C-terminus: Ribonuclease PH (237 aa).

Residues Arg-86 and 124–126 (GTR) contribute to the phosphate site.

This sequence belongs to the RNase PH family. As to quaternary structure, homohexameric ring arranged as a trimer of dimers.

The enzyme catalyses tRNA(n+1) + phosphate = tRNA(n) + a ribonucleoside 5'-diphosphate. In terms of biological role, phosphorolytic 3'-5' exoribonuclease that plays an important role in tRNA 3'-end maturation. Removes nucleotide residues following the 3'-CCA terminus of tRNAs; can also add nucleotides to the ends of RNA molecules by using nucleoside diphosphates as substrates, but this may not be physiologically important. Probably plays a role in initiation of 16S rRNA degradation (leading to ribosome degradation) during starvation. This chain is Ribonuclease PH, found in Bradyrhizobium diazoefficiens (strain JCM 10833 / BCRC 13528 / IAM 13628 / NBRC 14792 / USDA 110).